Reading from the N-terminus, the 367-residue chain is MDHVKLVNDPIDIAHIHQLLADAGCGASSVFVGTTRDNFQGKKVVSLAYEAYDSMALKEMNKICLDLRSKWPDLKHIVIYHRLGTVPVCEASVVIAASSPHRSEALESVSFAIDQLKTRVPIWKKEIYEGDHVSEWKENKESIRPKRSKSAFNYAACPCKVEESHDVPRTLVQIRVNDAELTKRLECFVNRKRDEINSQNVIDFKSSFVNSDIDLSDSCARTQSTIIKQEQSNCHLKVRRVNNRCGPQQMEMRPNYELELNKLMGSRDGQTDPFKEMRKSLPNSRLQAIESYMCLTTDNEENIFSRIKKVENRLLQLESISPEYRHFTKLEPSSMELPPPKKIRKKSYSVPELSAFIQKIKEGSEFA.

Substrate-binding positions include 101–102 (HR), K117, and 124–126 (KKE).

It belongs to the MoaE family. MOCS2B subfamily. In terms of assembly, heterotetramer; composed of 2 small (Mocs2A) and 2 large (Mocs2B) subunits.

The protein resides in the cytoplasm. It catalyses the reaction 2 [molybdopterin-synthase sulfur-carrier protein]-C-terminal-Gly-aminoethanethioate + cyclic pyranopterin phosphate + H2O = molybdopterin + 2 [molybdopterin-synthase sulfur-carrier protein]-C-terminal Gly-Gly + 2 H(+). It functions in the pathway cofactor biosynthesis; molybdopterin biosynthesis. In terms of biological role, catalytic subunit of the molybdopterin synthase complex, a complex that catalyzes the conversion of precursor Z into molybdopterin. Acts by mediating the incorporation of 2 sulfur atoms from thiocarboxylated Mocs2A into precursor Z to generate a dithiolene group. This is Molybdopterin synthase catalytic subunit from Drosophila erecta (Fruit fly).